The sequence spans 215 residues: MLIPKKYYLLIILLSNCLLASCSINTPNPSNIALMQLTRENNYNLKWHSHKYLVKKINHYRTNGLFAYLSRNKITYANFNWQQISTNHYRLVLLNMIGNAKIDLHILPGLVKLIDFQGQSYLNEEALARIKILLGLDLPLNELHEWILGLPGQATNLTFNQQGYLHKISYHYHGQHWNITYKSYHEDKIPALPDCIEIRQDNNLIKLKMNEWSMS.

The first 21 residues, 1–21, serve as a signal peptide directing secretion; that stretch reads MLIPKKYYLLIILLSNCLLAS. Residue C22 is the site of N-palmitoyl cysteine attachment. The S-diacylglycerol cysteine moiety is linked to residue C22.

It belongs to the LolB family. Monomer.

It localises to the cell outer membrane. Plays a critical role in the incorporation of lipoproteins in the outer membrane after they are released by the LolA protein. This is Outer-membrane lipoprotein LolB from Baumannia cicadellinicola subsp. Homalodisca coagulata.